The sequence spans 746 residues: Ferric enterobactin receptor (746 aa).

The signal sequence occupies residues 1–25 (MSSRALPAVPFLLLSSCLLANAVHA). Positions 39 to 44 (QTVVAT) match the TonB box motif. The TBDR plug domain maps to 47 to 174 (EETKQAPGVS…AGGVVNIITK (128 aa)). 3 disordered regions span residues 82–102 (VNLT…IDIR), 235–254 (GHES…GREG), and 397–424 (QKLD…KNRS). Over residues 84–98 (LTGNSSSGQRGNNRQ) the composition is skewed to polar residues. One can recognise a TBDR beta-barrel domain in the interval 179-746 (ETHGNLSVYS…TFYTSLTASF (568 aa)). A compositionally biased stretch (polar residues) spans 402-411 (PSSNTQNTEE). The TonB C-terminal box motif lies at 729–746 (ATYNEPGRTFYTSLTASF).

This sequence belongs to the TonB-dependent receptor family.

It is found in the cell outer membrane. Functionally, specific receptor for the siderophore ferric enterobactin. This chain is Ferric enterobactin receptor (pfeA), found in Pseudomonas aeruginosa (strain ATCC 15692 / DSM 22644 / CIP 104116 / JCM 14847 / LMG 12228 / 1C / PRS 101 / PAO1).